A 97-amino-acid polypeptide reads, in one-letter code: Large ribosomal subunit protein eL21 (97 aa).

Belongs to the eukaryotic ribosomal protein eL21 family.

The protein is Large ribosomal subunit protein eL21 of Methanococcoides burtonii (strain DSM 6242 / NBRC 107633 / OCM 468 / ACE-M).